Consider the following 391-residue polypeptide: Probable protein arginine N-methyltransferase 6.1 (391 aa).

The disordered stretch occupies residues 1–35 (MLPSHLNGHSPLARRCPRLSAASPPATGDSDAAAA). The span at 20–35 (SAASPPATGDSDAAAA) shows a compositional bias: low complexity. The region spanning 45-391 (DRIYFQSYSH…QTLVKDYAMR (347 aa)) is the SAM-dependent MTase PRMT-type domain. S-adenosyl-L-methionine-binding residues include His58, Arg67, Gly91, Glu113, and Glu142. Active-site residues include Glu156 and Glu165.

It belongs to the class I-like SAM-binding methyltransferase superfamily. Protein arginine N-methyltransferase family. PRMT6 subfamily.

Functionally, arginine methyltransferase that can both catalyze the formation of omega-N monomethylarginine (MMA) and asymmetrical dimethylarginine (aDMA). The protein is Probable protein arginine N-methyltransferase 6.1 (PRMT6.1) of Oryza sativa subsp. japonica (Rice).